We begin with the raw amino-acid sequence, 283 residues long: MGASVSRGRAARVPAPEPEPEEALDLSQLPPELLLVVLSHVPPRTLLGRCRQVCRGWRALVDGQALWLLILARDHGATGRALLHLARSCQSPARNARPCPLGRFCARRPIGRNLIRNPCGQEGLRKWMVQHGGDGWVVEENRTTVPGAPSQTCFVTSFSWCCKKQVLDLEEEGLWPELLDSGRIEICVSDWWGARHDSGCMYRLLVQLLDANQTVLDKFSAVPDPIPQWNNNACLHVTHVFSNIKMGVRFVSFEHRGQDTQFWAGHYGARVTNSSVIVRVRLS.

The tract at residues Met1–Ala23 is disordered. The region spanning Ala23 to Ile70 is the F-box domain. The 177-residue stretch at Phe104–Val280 folds into the FBA domain.

As to quaternary structure, part of a SCF (SKP1-cullin-F-box) protein ligase complex. Interacts with SKP1 and CUL1. Predominantly expressed in brain, heart and kidney. Expressed at lower levels in liver and lung.

Its function is as follows. Substrate-recognition component of the SCF (SKP1-CUL1-F-box protein)-type E3 ubiquitin ligase complex. Able to recognize and bind denatured glycoproteins, which are modified with complex-type oligosaccharides. The polypeptide is F-box only protein 27 (FBXO27) (Homo sapiens (Human)).